Reading from the N-terminus, the 356-residue chain is Dynein axonemal heavy chain 12 (356 aa).

6 ANK repeats span residues aspartate 17–valine 46, serine 50–arginine 81, serine 82–phenylalanine 111, histidine 124–glutamine 153, aspartate 154–tyrosine 183, and cysteine 185–leucine 218. Residues tryptophan 290–aspartate 345 form the SOCS box domain.

Belongs to the dynein heavy chain family. In terms of assembly, consists of at least two heavy chains and a number of intermediate and light chains.

The protein localises to the cytoplasm. It localises to the cytoskeleton. Its subcellular location is the cilium axoneme. The protein operates within protein modification; protein ubiquitination. Force generating protein of respiratory cilia. Produces force towards the minus ends of microtubules. Dynein has ATPase activity; the force-producing power stroke is thought to occur on release of ADP. Involved in sperm motility; implicated in sperm flagellar assembly. In terms of biological role, may be a substrate-recognition component of a SCF-like ECS (Elongin-Cullin-SOCS-box protein) E3 ubiquitin-protein ligase complex which mediates the ubiquitination and subsequent proteasomal degradation of target proteins. The sequence is that of Dynein axonemal heavy chain 12 (DNAH12) from Bos taurus (Bovine).